Reading from the N-terminus, the 333-residue chain is Autoinducer 2 import system permease protein LsrD (333 aa).

Transmembrane regions (helical) follow at residues 7–27 (YGWE…FGLS), 45–65 (ICIG…GIDI), 67–87 (FGST…AGVP), 90–110 (VAIP…AGLI), 118–138 (LVIT…LSGL), 162–182 (LFGL…FWLL), 212–232 (TLCM…ILLV), 240–260 (SDLG…GGAN), 261–281 (IYGG…VGYL), and 288–308 (IGTP…LVVV).

This sequence belongs to the binding-protein-dependent transport system permease family. AraH/RbsC subfamily. In terms of assembly, the complex is composed of two ATP-binding proteins (LsrA), two transmembrane proteins (LsrC and LsrD) and a solute-binding protein (LsrB).

It is found in the cell inner membrane. Functionally, part of the ABC transporter complex LsrABCD involved in autoinducer 2 (AI-2) import. Probably responsible for the translocation of the substrate across the membrane. The polypeptide is Autoinducer 2 import system permease protein LsrD (lsrD) (Yersinia pseudotuberculosis serotype IB (strain PB1/+)).